The sequence spans 160 residues: SPbeta prophage-derived uncharacterized protein YokE (160 aa).

The protein is SPbeta prophage-derived uncharacterized protein YokE (yokE) of Bacillus subtilis (strain 168).